Consider the following 369-residue polypeptide: Peridinin-chlorophyll a-binding protein 2, chloroplastic (369 aa).

The transit peptide at 1–56 directs the protein to the chloroplast; the sequence is MVRSGKKAVVLATVAFCATSVVQKTCGFVPSPLRQRAAAAGAAASVATMFAPAAFA. 2 tandem repeats follow at residues 57–219 and 220–369.

Homotrimer.

The protein resides in the plastid. The protein localises to the chloroplast. Functionally, water-soluble antenna for capture of solar energy in the blue-green range. Peridinin is an asymmetric carotenoid. The sequence is that of Peridinin-chlorophyll a-binding protein 2, chloroplastic from Amphidinium carterae (Dinoflagellate).